The primary structure comprises 252 residues: tRNA (guanine-N(7)-)-methyltransferase (252 aa).

The S-adenosyl-L-methionine site is built by Glu-80, Glu-105, Asp-132, and Asp-155. Asp-155 is a catalytic residue. Substrate-binding positions include Lys-159, Asp-191, and 231–234 (TKFE).

It belongs to the class I-like SAM-binding methyltransferase superfamily. TrmB family.

It carries out the reaction guanosine(46) in tRNA + S-adenosyl-L-methionine = N(7)-methylguanosine(46) in tRNA + S-adenosyl-L-homocysteine. It functions in the pathway tRNA modification; N(7)-methylguanine-tRNA biosynthesis. Functionally, catalyzes the formation of N(7)-methylguanine at position 46 (m7G46) in tRNA. The polypeptide is tRNA (guanine-N(7)-)-methyltransferase (Actinobacillus succinogenes (strain ATCC 55618 / DSM 22257 / CCUG 43843 / 130Z)).